Reading from the N-terminus, the 270-residue chain is Acyl-[acyl-carrier-protein]--UDP-N-acetylglucosamine O-acyltransferase (270 aa).

This sequence belongs to the transferase hexapeptide repeat family. LpxA subfamily. As to quaternary structure, homotrimer.

Its subcellular location is the cytoplasm. It catalyses the reaction a (3R)-hydroxyacyl-[ACP] + UDP-N-acetyl-alpha-D-glucosamine = a UDP-3-O-[(3R)-3-hydroxyacyl]-N-acetyl-alpha-D-glucosamine + holo-[ACP]. It participates in glycolipid biosynthesis; lipid IV(A) biosynthesis; lipid IV(A) from (3R)-3-hydroxytetradecanoyl-[acyl-carrier-protein] and UDP-N-acetyl-alpha-D-glucosamine: step 1/6. Involved in the biosynthesis of lipid A, a phosphorylated glycolipid that anchors the lipopolysaccharide to the outer membrane of the cell. This chain is Acyl-[acyl-carrier-protein]--UDP-N-acetylglucosamine O-acyltransferase, found in Helicobacter pylori (strain J99 / ATCC 700824) (Campylobacter pylori J99).